The primary structure comprises 373 residues: MGAQAPLRLPAAPPLAVCGYTSVLLLFAFCLPGSGASNQPAGGGGDCPGGRGKSINCSELNLRESDIRACDESSCKYGGVCKEDGDGLKCACQFQCHTNYIPVCGSNGDTYQNECFLRRAACKHQKDITVVARGPCYSDNGSGSGEGEEEGSGAGAHRKHSKCGPCKYKAECDEDAENVGCVCNIDCSGYSFNPVCASDGSSYNNPCFVREASCIRQEQIDIRHLGHCTDTDDTSLLGKKDDGLQYRPDVKDAGDQREDVYIGSHMPCPENLNGYCIHGKCEFIYSTQKASCRCESGYTGQHCEKTDFSILYVVPSRQKLTHVLIAAIIGAVQIAIIVAIVMCITRKCPKNNRGRRQKQNLGHFTSETSSRMV.

The N-terminal stretch at 1-36 is a signal peptide; that stretch reads MGAQAPLRLPAAPPLAVCGYTSVLLLFAFCLPGSGA. The Extracellular segment spans residues 37–323; it reads SNQPAGGGGD…VPSRQKLTHV (287 aa). Residue Asn56 is glycosylated (N-linked (GlcNAc...) asparagine). Positions 91 to 138 constitute a Kazal-like 1 domain; that stretch reads ACQFQCHTNYIPVCGSNGDTYQNECFLRRAACKHQKDITVVARGPCYS. 3 disulfide bridges follow: Cys92/Cys122, Cys96/Cys115, and Cys104/Cys136. Residue Asn140 is glycosylated (N-linked (GlcNAc...) asparagine). The interval 140–162 is disordered; that stretch reads NGSGSGEGEEEGSGAGAHRKHSK. The region spanning 182 to 230 is the Kazal-like 2 domain; sequence VCNIDCSGYSFNPVCASDGSSYNNPCFVREASCIRQEQIDIRHLGHCTD. 6 disulfide bridges follow: Cys183–Cys214, Cys187–Cys207, Cys196–Cys228, Cys268–Cys281, Cys276–Cys292, and Cys294–Cys303. Residues 264 to 304 enclose the EGF-like domain; the sequence is SHMPCPENLNGYCIHGKCEFIYSTQKASCRCESGYTGQHCE. Residues 324–344 traverse the membrane as a helical segment; sequence LIAAIIGAVQIAIIVAIVMCI. Residues 345–373 lie on the Cytoplasmic side of the membrane; it reads TRKCPKNNRGRRQKQNLGHFTSETSSRMV. Positions 352–373 are disordered; it reads NRGRRQKQNLGHFTSETSSRMV. Over residues 359-373 the composition is skewed to polar residues; the sequence is QNLGHFTSETSSRMV.

Belongs to the tomoregulin family. May interact with ST14.

It localises to the cell membrane. Its function is as follows. Neuron-specific restriction factor that prevents herpes simplex virus 1 (HHV-1) infection in the brain by blocking viral entry. Also able to restrict herpes simplex virus 2 (HHV-2) infection, although to a lesser extent. Acts by preventing the association between the viral glycoprotein D (gD) and its cell surface receptor NECTIN1, thereby inhibiting fusion of the virus and the cell membrane. Also able to prevent the association between the viral glycoprotein B (gB) and MYH9/NMMHC-IIA and MYH10/NMMHC-IIB receptors. The polypeptide is Tomoregulin-1 (Tmeff1) (Rattus norvegicus (Rat)).